Here is a 258-residue protein sequence, read N- to C-terminus: MASVVSLAGTLGLLLVSALPEVLGDRRSPDRRAHPGDAGQVGPAAAEPRRQSPPSKNQRERARSGALPLGALYTAAAVAFVLYKCLQQGKDEAAVLQEEADKKDSLQSEQHLAQLTQQLVQTEQHLNSLMAQLDPLFERVTTLAGAQQELLHMKLQTIHQLLQDSKPNKGVEVPEPEASIPFLEDFCIEEDEEEAGDNQAWEEPLNWNTGTRNLTPPREMQPTLRRRCRKSAAQGLSHSPHWKEGKTVDGLVKQSLFL.

Residues 1 to 24 (MASVVSLAGTLGLLLVSALPEVLG) form the signal peptide. Residues 25 to 35 (DRRSPDRRAHP) are compositionally biased toward basic and acidic residues. The segment at 25-63 (DRRSPDRRAHPGDAGQVGPAAAEPRRQSPPSKNQRERAR) is disordered. Residues 66-86 (ALPLGALYTAAAVAFVLYKCL) form a helical membrane-spanning segment. Residues 106 to 134 (LQSEQHLAQLTQQLVQTEQHLNSLMAQLD) adopt a coiled-coil conformation. Residues 203–222 (EPLNWNTGTRNLTPPREMQP) form a disordered region.

It localises to the membrane. This chain is Coiled-coil domain-containing protein 107 (CCDC107), found in Bos taurus (Bovine).